The following is a 433-amino-acid chain: Adenylosuccinate synthetase (433 aa).

Residues 11–17 and 39–41 contribute to the GTP site; these read GDEGKGK and GHT. The active-site Proton acceptor is the aspartate 12. Residues aspartate 12 and glycine 39 each coordinate Mg(2+). Residues 12-15, 37-40, threonine 134, arginine 148, asparagine 230, threonine 245, and arginine 309 each bind IMP; these read DEGK and NAGH. The active-site Proton donor is the histidine 40. 305 to 311 contacts substrate; sequence VTTGRKR. GTP is bound by residues arginine 311, 337-339, and 419-421; these read KLD and GTG.

This sequence belongs to the adenylosuccinate synthetase family. In terms of assembly, homodimer. The cofactor is Mg(2+).

Its subcellular location is the cytoplasm. It carries out the reaction IMP + L-aspartate + GTP = N(6)-(1,2-dicarboxyethyl)-AMP + GDP + phosphate + 2 H(+). The protein operates within purine metabolism; AMP biosynthesis via de novo pathway; AMP from IMP: step 1/2. Plays an important role in the de novo pathway and in the salvage pathway of purine nucleotide biosynthesis. Catalyzes the first committed step in the biosynthesis of AMP from IMP. This Saccharomyces cerevisiae (strain Lalvin EC1118 / Prise de mousse) (Baker's yeast) protein is Adenylosuccinate synthetase.